The sequence spans 596 residues: Choline dehydrogenase, mitochondrial (596 aa).

Residues 1-34 constitute a mitochondrion transit peptide; sequence MWQVLRGWRKGWQSPRGALAWAVQGQPCPPCSRA. 44–73 contributes to the FAD binding site; it reads TFVVVGAGSAGCVLASRLTEDPNHRVLLLE. An N6-succinyllysine modification is found at Lys438. 2 positions are modified to N6-acetyllysine; alternate: Lys486 and Lys498. N6-succinyllysine; alternate occurs at positions 486 and 498. Residue His513 is the Proton acceptor of the active site. Position 582 is an N6-acetyllysine (Lys582).

The protein belongs to the GMC oxidoreductase family. FAD is required as a cofactor. Post-translationally, acetylation of Lys-498 is observed in liver mitochondria from fasted mice but not from fed mice.

The protein localises to the mitochondrion inner membrane. The enzyme catalyses choline + A = betaine aldehyde + AH2. It functions in the pathway amine and polyamine biosynthesis; betaine biosynthesis via choline pathway; betaine aldehyde from choline (cytochrome c reductase route): step 1/1. This is Choline dehydrogenase, mitochondrial (Chdh) from Mus musculus (Mouse).